A 705-amino-acid chain; its full sequence is Glycine--tRNA ligase beta subunit (705 aa).

Belongs to the class-II aminoacyl-tRNA synthetase family. As to quaternary structure, tetramer of two alpha and two beta subunits.

The protein localises to the cytoplasm. It catalyses the reaction tRNA(Gly) + glycine + ATP = glycyl-tRNA(Gly) + AMP + diphosphate. This is Glycine--tRNA ligase beta subunit from Persephonella marina (strain DSM 14350 / EX-H1).